A 67-amino-acid chain; its full sequence is Protein C' (67 aa).

This sequence belongs to the rhabdoviruses C protein family.

Seems to stimulates transcription by the viral polymerase. May play a role in viral pathogenesis or transmission by insects vectors. The chain is Protein C' (P) from Vesicular stomatitis Indiana virus (strain San Juan) (VSIV).